Here is a 140-residue protein sequence, read N- to C-terminus: Large-conductance mechanosensitive channel (140 aa).

Transmembrane regions (helical) follow at residues 16 to 36 and 84 to 104; these read VIDL…VTAL and INTV…VKLI.

This sequence belongs to the MscL family. In terms of assembly, homopentamer.

The protein resides in the cell inner membrane. Its function is as follows. Channel that opens in response to stretch forces in the membrane lipid bilayer. May participate in the regulation of osmotic pressure changes within the cell. The polypeptide is Large-conductance mechanosensitive channel (Xanthomonas oryzae pv. oryzae (strain MAFF 311018)).